We begin with the raw amino-acid sequence, 314 residues long: Acetyl-coenzyme A carboxylase carboxyl transferase subunit alpha (314 aa).

Residues 32-289 (EIDMLEASLE…KSAFVAQLDS (258 aa)) form the CoA carboxyltransferase C-terminal domain.

The protein belongs to the AccA family. In terms of assembly, acetyl-CoA carboxylase is a heterohexamer composed of biotin carboxyl carrier protein (AccB), biotin carboxylase (AccC) and two subunits each of ACCase subunit alpha (AccA) and ACCase subunit beta (AccD).

It localises to the cytoplasm. The catalysed reaction is N(6)-carboxybiotinyl-L-lysyl-[protein] + acetyl-CoA = N(6)-biotinyl-L-lysyl-[protein] + malonyl-CoA. Its pathway is lipid metabolism; malonyl-CoA biosynthesis; malonyl-CoA from acetyl-CoA: step 1/1. In terms of biological role, component of the acetyl coenzyme A carboxylase (ACC) complex. First, biotin carboxylase catalyzes the carboxylation of biotin on its carrier protein (BCCP) and then the CO(2) group is transferred by the carboxyltransferase to acetyl-CoA to form malonyl-CoA. This Staphylococcus aureus (strain JH9) protein is Acetyl-coenzyme A carboxylase carboxyl transferase subunit alpha.